The following is a 1761-amino-acid chain: Nonribosomal peptide synthetase 6 (1761 aa).

The tract at residues glutamate 63–arginine 468 is adenylation. The Carrier 1 domain occupies glutamate 600 to serine 675. O-(pantetheine 4'-phosphoryl)serine is present on serine 636. The interval valine 712–aspartate 1135 is condensation 1. 2 Carrier domains span residues serine 1169–arginine 1242 and serine 1237–threonine 1313. O-(pantetheine 4'-phosphoryl)serine is present on residues serine 1203 and serine 1274. The tract at residues isoleucine 1354–valine 1677 is condensation 2.

It belongs to the NRP synthetase family.

Its pathway is siderophore biosynthesis. Its function is as follows. Nonribosomal peptide synthetase; part of the gene cluster that mediates the biosynthesis of hydroxamate-containing siderophores that play a critical role in virulence. Cochliobolus heterostrophus produces extracellular coprogen-type siderophores including coprogen, neocoprogen I and neocoprogen II, as well as the intracellular siderophore ferricrocin. The role of extracellular siderophores is to supply iron to the fungus during plant infection, and the intracellular ferricrocin is required for intracellular iron distribution and storage with a crucial role in ascus and ascospore development. SIDA2 catalyzes the conversion of L-ornithine to N(5)-hydroxyornithine, the first step in the biosynthesis of all hydroxamate-containing siderophores. The assembly of extracellular coprogen-type siderophores is then performed by the nonribosomal peptide synthetase (NRPS) NPS6 whereas the intracellular siderophore ferricrocin is assembled by NPS2. This is Nonribosomal peptide synthetase 6 from Cochliobolus heterostrophus (strain C4 / ATCC 48331 / race T) (Southern corn leaf blight fungus).